Reading from the N-terminus, the 410-residue chain is UDP-N-acetylglucosamine--N-acetylmuramyl-(pentapeptide) pyrophosphoryl-undecaprenol N-acetylglucosamine transferase (410 aa).

The segment at methionine 1 to serine 35 is disordered. Over residues alanine 14 to serine 35 the composition is skewed to low complexity. Residues threonine 45 to glycine 47, asparagine 167, arginine 204, serine 238, and glutamine 334 contribute to the UDP-N-acetyl-alpha-D-glucosamine site.

It belongs to the glycosyltransferase 28 family. MurG subfamily.

The protein resides in the cell membrane. It catalyses the reaction di-trans,octa-cis-undecaprenyl diphospho-N-acetyl-alpha-D-muramoyl-L-alanyl-D-glutamyl-meso-2,6-diaminopimeloyl-D-alanyl-D-alanine + UDP-N-acetyl-alpha-D-glucosamine = di-trans,octa-cis-undecaprenyl diphospho-[N-acetyl-alpha-D-glucosaminyl-(1-&gt;4)]-N-acetyl-alpha-D-muramoyl-L-alanyl-D-glutamyl-meso-2,6-diaminopimeloyl-D-alanyl-D-alanine + UDP + H(+). It functions in the pathway cell wall biogenesis; peptidoglycan biosynthesis. In terms of biological role, cell wall formation. Catalyzes the transfer of a GlcNAc subunit on undecaprenyl-pyrophosphoryl-MurNAc-pentapeptide (lipid intermediate I) to form undecaprenyl-pyrophosphoryl-MurNAc-(pentapeptide)GlcNAc (lipid intermediate II). This chain is UDP-N-acetylglucosamine--N-acetylmuramyl-(pentapeptide) pyrophosphoryl-undecaprenol N-acetylglucosamine transferase, found in Mycobacterium tuberculosis (strain ATCC 25177 / H37Ra).